The primary structure comprises 317 residues: ADP-L-glycero-D-manno-heptose-6-epimerase (317 aa).

NADP(+) contacts are provided by residues 10-11 (FI), 31-32 (DD), K38, K53, 75-79 (QGACS), and N92. Y139 (proton acceptor) is an active-site residue. Residue K143 coordinates NADP(+). N166 provides a ligand contact to substrate. Residues V167 and K175 each coordinate NADP(+). The active-site Proton acceptor is the K175. Substrate-binding positions include G177, H184, 198–201 (FEGV), R211, and Y275.

Belongs to the NAD(P)-dependent epimerase/dehydratase family. HldD subfamily. As to quaternary structure, homopentamer. Requires NADP(+) as cofactor.

It carries out the reaction ADP-D-glycero-beta-D-manno-heptose = ADP-L-glycero-beta-D-manno-heptose. Its pathway is nucleotide-sugar biosynthesis; ADP-L-glycero-beta-D-manno-heptose biosynthesis; ADP-L-glycero-beta-D-manno-heptose from D-glycero-beta-D-manno-heptose 7-phosphate: step 4/4. Its function is as follows. Catalyzes the interconversion between ADP-D-glycero-beta-D-manno-heptose and ADP-L-glycero-beta-D-manno-heptose via an epimerization at carbon 6 of the heptose. In Shewanella piezotolerans (strain WP3 / JCM 13877), this protein is ADP-L-glycero-D-manno-heptose-6-epimerase.